The following is a 1755-amino-acid chain: Periplakin (1755 aa).

The span at 1–11 (MHSLFRKRNKG) shows a compositional bias: basic residues. The interval 1-20 (MHSLFRKRNKGKYSPTVQTR) is disordered. S14 bears the Phosphoserine mark. Coiled-coil stretches lie at residues 16 to 125 (TVQT…KQMY) and 182 to 387 (LAKD…QQVV). 3 Spectrin repeats span residues 214–315 (QDYM…SHLK), 321–483 (HQFH…HALQ), and 503–610 (RQLL…EKVD). The region spanning 397 to 453 (LKPIPVEALCDFESDQGLISRGYSYTLQKNNGESWELTDSTGKKLAAPAVCFIIPPT) is the SH3 domain. Position 463 is a phosphoserine (S463). 2 coiled-coil regions span residues 611–819 (VANR…RNSH) and 883–1644 (LSSG…SVAV). Phosphoserine occurs at positions 885, 947, 1583, and 1656. The segment at 1556-1755 (ELDFLREENH…ELAVLVSGQK (200 aa)) is interacts with BFSP2 and VIM. 2 Plectin repeats span residues 1650–1684 (ENHL…WKMF) and 1699–1734 (VKGP…AAQY).

Belongs to the plakin or cytolinker family. Homodimer or a heterodimer with EVPL. Found in a complex composed of PPL (via C-terminal linker domain), BFSP1 and BFSP2 in the retinal lens. Within the complex interacts (via C-terminal linker domain) with BFSP2. Interacts with VIM. Binds to the PH domain of AKT1. Interacts with FCGR1A. May interact with PPHLN1. As to expression, expressed in the retinal lens (at protein level).

It is found in the cell junction. The protein resides in the desmosome. It localises to the cytoplasm. The protein localises to the cytoskeleton. Its subcellular location is the cell membrane. In terms of biological role, component of the cornified envelope of keratinocytes. May link the cornified envelope to desmosomes and intermediate filaments. May act as a localization signal in PKB/AKT-mediated signaling. The chain is Periplakin (Ppl) from Mus musculus (Mouse).